A 404-amino-acid chain; its full sequence is Lissencephaly-1 homolog (404 aa).

A LisH domain is found at 7 to 39 (QKEEINRAIAEYMQNNGYSESFSVFLKESSLSE). Residues 54–81 (TTVLRLQRKVNDLESKLQESQREINHGA) adopt a coiled-coil conformation. Residues 69-89 (KLQESQREINHGAPTRDKRQA) show a composition bias toward basic and acidic residues. Residues 69 to 90 (KLQESQREINHGAPTRDKRQAA) are disordered. WD repeat units follow at residues 104 to 145 (GHRL…RTLK), 146 to 185 (GHTDAVNDIAIDAAGKQLVSCSSDLSIKLWDFGQTYDCLK), 189 to 228 (GHEHTVSSVTFLPTGDFVLSASRDHTIKQWDISTGYCVYT), 231 to 270 (GHNDWVRMIRISNDGTLFASASLDQTVTVWSFATKSAKLV), 273 to 327 (DHEH…VLFT), 330 to 369 (AHENWVRGLAFHPKGKYLISVADDKTLRVWELSAQRCMKA), and 372 to 404 (AHEHFVSTVAFHQTSPFVITGSVDMSCKVWECR).

Belongs to the WD repeat LIS1/nudF family. In terms of assembly, component of a dynein-regulating complex composed of at least lis-1 and nud-2. Interacts with nud-2; the interaction is direct. As to expression, expressed in all classes of neurons in the ventral cord. Expressed in the multinucleate spermathecal valves and adult seam cells.

It localises to the cytoplasm. The protein resides in the cytoskeleton. The protein localises to the microtubule organizing center. It is found in the centrosome. Its subcellular location is the chromosome. It localises to the centromere. The protein resides in the kinetochore. The protein localises to the nucleus envelope. In terms of biological role, positively regulates the activity of the minus-end directed microtubule motor protein dynein. May enhance dynein-mediated microtubule sliding by targeting dynein to the microtubule plus end. Required for several dynein- and microtubule-dependent processes such as nuclear migration during cell division. Part of a complex with nud-2, which is recruited to the nuclear envelope by unc-83, where, in turn, it recruits dynein to the nuclear surface and regulates nuclear migration in hypodermal precursor cells. Plays a role in GABAergic synaptic vesicle localization in the ventral nerve cord. Required for neuronal cell differentiation. In Caenorhabditis elegans, this protein is Lissencephaly-1 homolog.